Consider the following 469-residue polypeptide: Uridine kinase-like protein 4 (469 aa).

Residues 46–249 are uridine kinase; sequence QRQPFVIGVA…IVQHICTKLG (204 aa). Residues 259–469 are uracil phosphoribosyltransferase; it reads NLYVIHSTFQ…GDRYFGTDDD (211 aa). Residues lysine 283, arginine 292, and 326–329 each bind GTP; that span reads CKRL. The 5-phospho-alpha-D-ribose 1-diphosphate site is built by arginine 336 and arginine 361. A GTP-binding site is contributed by arginine 381. Residues aspartate 387, 392–395, and glutamate 458 each bind 5-phospho-alpha-D-ribose 1-diphosphate; that span reads TGNS. Uracil is bound at residue 457–459; the sequence is GEF.

In the N-terminal section; belongs to the uridine kinase family. This sequence in the C-terminal section; belongs to the UPRTase family. Mg(2+) serves as cofactor.

It catalyses the reaction UMP + diphosphate = 5-phospho-alpha-D-ribose 1-diphosphate + uracil. The enzyme catalyses cytidine + ATP = CMP + ADP + H(+). The catalysed reaction is uridine + ATP = UMP + ADP + H(+). The protein operates within pyrimidine metabolism; UMP biosynthesis via salvage pathway; UMP from uracil: step 1/1. It functions in the pathway pyrimidine metabolism; CTP biosynthesis via salvage pathway; CTP from cytidine: step 1/3. Its pathway is pyrimidine metabolism; UMP biosynthesis via salvage pathway; UMP from uridine: step 1/1. Allosterically activated by GTP. Its function is as follows. Involved in the pyrimidine salvage pathway. The uracil phosphoribosyltransferase (UPRT) activity, that catalyzes the conversion of uracil and 5-phospho-alpha-D-ribose 1-diphosphate (PRPP) to UMP and diphosphate, is unsure. The polypeptide is Uridine kinase-like protein 4 (UKL4) (Arabidopsis thaliana (Mouse-ear cress)).